The chain runs to 293 residues: MPEGLIVKALSGFYYVQSEGALIQCRGRGVFRKRKQTPLVGDYVEFEAENETDGYVMAIKERKNQLNRPPIANVDQAILVFSAKEPDFHTLLLDRFLVHIEQHDIKPVLIISKTDLLEASERDALTRQVAMYEQIGYPVLYTSTKQADDPSELLPLLANQVSVIAGQSGVGKSSLLNALAPEAKIETNEISRHLGRGRHTTRHTELLPIGEGLVADTPGFSSLEFTDMEAEDLRFCFPEFLSLMDDCKFRGCLHDKEPKCAIKDAVETGEVDSFRYKHYLQFLHEIQDQKRRY.

A CP-type G domain is found at 63–223 (KNQLNRPPIA…VADTPGFSSL (161 aa)). GTP contacts are provided by residues 112–115 (SKTD) and 166–174 (GQSGVGKSS). Zn(2+)-binding residues include C247, C252, H254, and C260.

This sequence belongs to the TRAFAC class YlqF/YawG GTPase family. RsgA subfamily. In terms of assembly, monomer. Associates with 30S ribosomal subunit, binds 16S rRNA. Zn(2+) serves as cofactor.

The protein localises to the cytoplasm. Functionally, one of several proteins that assist in the late maturation steps of the functional core of the 30S ribosomal subunit. Helps release RbfA from mature subunits. May play a role in the assembly of ribosomal proteins into the subunit. Circularly permuted GTPase that catalyzes slow GTP hydrolysis, GTPase activity is stimulated by the 30S ribosomal subunit. The chain is Small ribosomal subunit biogenesis GTPase RsgA from Shouchella clausii (strain KSM-K16) (Alkalihalobacillus clausii).